The sequence spans 402 residues: Imidazolonepropionase (402 aa).

2 residues coordinate Fe(3+): His66 and His68. Zn(2+)-binding residues include His66 and His68. Arg75, Tyr138, and His171 together coordinate 4-imidazolone-5-propanoate. Tyr138 serves as a coordination point for N-formimidoyl-L-glutamate. Fe(3+) is bound at residue His236. His236 is a binding site for Zn(2+). A 4-imidazolone-5-propanoate-binding site is contributed by Gln239. Asp311 contacts Fe(3+). Zn(2+) is bound at residue Asp311. The N-formimidoyl-L-glutamate site is built by Asn313 and Gly315. Position 316 (Thr316) interacts with 4-imidazolone-5-propanoate.

Belongs to the metallo-dependent hydrolases superfamily. HutI family. It depends on Zn(2+) as a cofactor. The cofactor is Fe(3+).

The protein resides in the cytoplasm. It carries out the reaction 4-imidazolone-5-propanoate + H2O = N-formimidoyl-L-glutamate. Its pathway is amino-acid degradation; L-histidine degradation into L-glutamate; N-formimidoyl-L-glutamate from L-histidine: step 3/3. Catalyzes the hydrolytic cleavage of the carbon-nitrogen bond in imidazolone-5-propanoate to yield N-formimidoyl-L-glutamate. It is the third step in the universal histidine degradation pathway. The sequence is that of Imidazolonepropionase from Pseudomonas aeruginosa (strain ATCC 15692 / DSM 22644 / CIP 104116 / JCM 14847 / LMG 12228 / 1C / PRS 101 / PAO1).